The primary structure comprises 279 residues: tRNA pseudouridine synthase A (279 aa).

Catalysis depends on Asp-54, which acts as the Nucleophile. Residue Tyr-112 coordinates substrate.

It belongs to the tRNA pseudouridine synthase TruA family. As to quaternary structure, homodimer.

It carries out the reaction uridine(38/39/40) in tRNA = pseudouridine(38/39/40) in tRNA. In terms of biological role, formation of pseudouridine at positions 38, 39 and 40 in the anticodon stem and loop of transfer RNAs. In Cutibacterium acnes (strain DSM 16379 / KPA171202) (Propionibacterium acnes), this protein is tRNA pseudouridine synthase A.